We begin with the raw amino-acid sequence, 376 residues long: DNA polymerase IV (376 aa).

In terms of domain architecture, UmuC spans 6–187; it reads IIHIDMDAFF…LSIGKFYGVG (182 aa). Mg(2+)-binding residues include Asp-10 and Asp-105. The active site involves Glu-106.

The protein belongs to the DNA polymerase type-Y family. As to quaternary structure, monomer. Requires Mg(2+) as cofactor.

The protein resides in the cytoplasm. The enzyme catalyses DNA(n) + a 2'-deoxyribonucleoside 5'-triphosphate = DNA(n+1) + diphosphate. Its function is as follows. Poorly processive, error-prone DNA polymerase involved in untargeted mutagenesis. Copies undamaged DNA at stalled replication forks, which arise in vivo from mismatched or misaligned primer ends. These misaligned primers can be extended by PolIV. Exhibits no 3'-5' exonuclease (proofreading) activity. May be involved in translesional synthesis, in conjunction with the beta clamp from PolIII. This is DNA polymerase IV from Desulfotalea psychrophila (strain LSv54 / DSM 12343).